The chain runs to 370 residues: Pyruvate dehydrogenase E1 component subunit alpha (370 aa).

Heterodimer of an alpha and a beta chain. The cofactor is thiamine diphosphate.

It catalyses the reaction N(6)-[(R)-lipoyl]-L-lysyl-[protein] + pyruvate + H(+) = N(6)-[(R)-S(8)-acetyldihydrolipoyl]-L-lysyl-[protein] + CO2. Functionally, the pyruvate dehydrogenase complex catalyzes the overall conversion of pyruvate to acetyl-CoA and CO(2). It contains multiple copies of three enzymatic components: pyruvate dehydrogenase (E1), dihydrolipoamide acetyltransferase (E2) and lipoamide dehydrogenase (E3). The polypeptide is Pyruvate dehydrogenase E1 component subunit alpha (pdhA) (Staphylococcus epidermidis (strain ATCC 35984 / DSM 28319 / BCRC 17069 / CCUG 31568 / BM 3577 / RP62A)).